We begin with the raw amino-acid sequence, 511 residues long: MEKFEGYSEKHKSCQQYFVYPLLFQEYIYAFAHDYGLNDSEPVEIISCNNKKFSSLLVKRLITRMYQQNFWINSINHPNQDRLLDYKIGFYSEFYSQILPEGFSIVVEIPFSLRELSCPKEKEIPKFQNLRSIHSIFPFLEDKFLHLDSISHIEIPYPIHLEILVQLLQYRIQDVPSLHLLRFFLNYYSNWNSFITSMKSIFLFKKENKRLFRFLYNSYVSEYEFLLVFLRKQSSCLPLSSSGTFLERIIFSRKMEHIGIMYPSFFRKTIWFVMDPLMHYVRYQGKAILASKGTHFLNKKWKWYLINLWQYLFSFWTQPRRVHLNQLANSCFDFLGYLSGVPKSSLLVRNQMLENLFLIDTRMKKLDTIVPVTALIGYLSKAQFCTGSGHPISKPIWTDLSDWDILDRFGRICRNLFHYHSGSSKKQTLYRLKYILRLSCARTLARKHKSTVRTFMQRLGSAFLEEFFTEQELVFSLMFTKTSLFSFRGSHSERIWYFDIIRINDLVKPLN.

It belongs to the intron maturase 2 family. MatK subfamily.

The protein resides in the plastid. It is found in the chloroplast. Functionally, usually encoded in the trnK tRNA gene intron. Probably assists in splicing its own and other chloroplast group II introns. The polypeptide is Maturase K (Avena sativa (Oat)).